The sequence spans 181 residues: MMEAAAKRVHIIQGEYKVVSDPDVVMTTILGSCVAACLRDPVAGLGGMNHFLLPGTGNVTGGDATRYGVHLMELLINGLLKQGARRDRLEAKVFGGAKTIASFSNVGEQNAIFAMQFLKDEGIPVISSSTGGDHGRKIEFWPVSGRARQHPLSGAETQKTVAMETRPVPAPKPVANDIEFF.

It belongs to the CheD family.

It carries out the reaction L-glutaminyl-[protein] + H2O = L-glutamyl-[protein] + NH4(+). In terms of biological role, probably deamidates glutamine residues to glutamate on methyl-accepting chemotaxis receptors (MCPs), playing an important role in chemotaxis. The chain is Probable chemoreceptor glutamine deamidase CheD from Agrobacterium fabrum (strain C58 / ATCC 33970) (Agrobacterium tumefaciens (strain C58)).